Consider the following 184-residue polypeptide: Ras-related protein O-Krev (184 aa).

GTP is bound at residue 10-17; it reads GSGGVGKS. Positions 32–40 match the Effector region motif; sequence YDPTIEDSY. Residues 57-61 and 116-119 contribute to the GTP site; these read DTAGT and NKCD. A Cysteine methyl ester modification is found at Cys-181. Cys-181 carries the S-geranylgeranyl cysteine lipid modification. Residues 182-184 constitute a propeptide, removed in mature form; sequence TLL.

Belongs to the small GTPase superfamily. Ras family.

Its subcellular location is the cell membrane. It catalyses the reaction GTP + H2O = GDP + phosphate + H(+). The protein is Ras-related protein O-Krev of Diplobatis ommata (Ocellated electric ray).